Consider the following 238-residue polypeptide: 14-3-3 protein 2 (238 aa).

The protein belongs to the 14-3-3 family.

Functionally, probable adapter protein. This chain is 14-3-3 protein 2, found in Entamoeba histolytica (strain ATCC 30459 / HM-1:IMSS / ABRM).